Consider the following 165-residue polypeptide: Group 10 secretory phospholipase A2 (165 aa).

An N-terminal signal peptide occupies residues 1 to 31 (MGPLPVCLPIMLLLLLPSLLLLLLLPGPGSG). Positions 32–42 (EASRILRVHRR) are excised as a propeptide. 8 disulfide bridges follow: Cys53–Cys111, Cys67–Cys157, Cys69–Cys85, Cys84–Cys139, Cys90–Cys164, Cys91–Cys132, Cys100–Cys125, and Cys118–Cys130. 3 residues coordinate Ca(2+): Phe68, Gly70, and Gly72. His88 is a catalytic residue. Ca(2+) is bound at residue Asp89. Asn113 carries an N-linked (GlcNAc...) asparagine glycan. Asp133 is a catalytic residue.

The protein belongs to the phospholipase A2 family. Interacts with PLA2R1; this interaction mediates PLA2G10 clearance and inactivation. Ca(2+) is required as a cofactor. In terms of tissue distribution, found in spleen, thymus, peripheral blood leukocytes, pancreas, lung, and colon. Expressed in neuronal fibers in dorsal root ganglia and in peripheral tissues including stomach, white adipose tissue and prostate (at protein level).

It is found in the secreted. Its subcellular location is the lysosome. It localises to the cytoplasmic vesicle. The protein resides in the secretory vesicle. The protein localises to the acrosome. It carries out the reaction a 1,2-diacyl-sn-glycero-3-phosphocholine + H2O = a 1-acyl-sn-glycero-3-phosphocholine + a fatty acid + H(+). The catalysed reaction is 1-hexadecanoyl-2-(9Z-octadecenoyl)-sn-glycero-3-phosphocholine + H2O = 1-hexadecanoyl-sn-glycero-3-phosphocholine + (9Z)-octadecenoate + H(+). It catalyses the reaction 1-octadecanoyl-2-(5Z,8Z,11Z,14Z-eicosatetraenoyl)-sn-glycero-3-phosphocholine + H2O = 1-octadecanoyl-sn-glycero-3-phosphocholine + (5Z,8Z,11Z,14Z)-eicosatetraenoate + H(+). The enzyme catalyses 1,2-dihexadecanoyl-sn-glycero-3-phosphocholine + H2O = 1-hexadecanoyl-sn-glycero-3-phosphocholine + hexadecanoate + H(+). It carries out the reaction 1-hexadecanoyl-2-(9Z-octadecenoyl)-sn-glycero-3-phosphoglycerol + H2O = 1-hexadecanoyl-sn-glycero-3-phosphoglycerol + (9Z)-octadecenoate + H(+). The catalysed reaction is 1,2-dihexadecanoyl-sn-glycero-3-phospho-(1'-sn-glycerol) + H2O = 1-hexadecanoyl-sn-glycero-3-phospho-(1'-sn-glycerol) + hexadecanoate + H(+). It catalyses the reaction 1-hexadecanoyl-2-(9Z-octadecenoyl)-sn-glycero-3-phospho-L-serine + H2O = 1-hexadecanoyl-sn-glycero-3-phospho-L-serine + (9Z)-octadecenoate + H(+). The enzyme catalyses 1-hexadecanoyl-2-(9Z,12Z-octadecadienoyl)-sn-glycero-3-phosphoethanolamine + H2O = 1-hexadecanoyl-sn-glycero-3-phosphoethanolamine + (9Z,12Z)-octadecadienoate + H(+). It carries out the reaction 1-hexadecanoyl-2-(9Z-octadecenoyl)-sn-glycero-3-phosphate + H2O = 1-hexadecanoyl-sn-glycero-3-phosphate + (9Z)-octadecenoate + H(+). The catalysed reaction is 1-O-hexadecyl-2-acetyl-sn-glycero-3-phosphocholine + H2O = 1-O-hexadecyl-sn-glycero-3-phosphocholine + acetate + H(+). With respect to regulation, inhibited by methyl indoxam. In terms of biological role, secretory calcium-dependent phospholipase A2 that primarily targets extracellular phospholipids. Hydrolyzes the ester bond of the fatty acyl group attached at sn-2 position of phospholipids with preference for phosphatidylcholines and phosphatidylglycerols over phosphatidylethanolamines. Preferentially releases sn-2 omega-6 and omega-3 polyunsaturated fatty acyl (PUFA) chains over saturated fatty acyls. Contributes to phospholipid remodeling of very low-density lipoprotein (VLDL), low-density lipoprotein (LDL) and high-density lipoprotein (HDL) particles. Hydrolyzes LDL phospholipids releasing unsaturated fatty acids that regulate macrophage differentiation toward foam cells. Efficiently hydrolyzes and inactivates platelet activating factor (PAF), a potent lipid mediator present in oxidized LDL. May act in an autocrine and paracrine manner. Secreted by lung epithelium, targets membrane phospholipids of infiltrating eosinophils, releasing arachidonate and boosting eicosanoid and cysteinyl leukotriene synthesis involved in airway inflammatory response. Secreted by gut epithelium, hydrolyzes dietary and biliary phosphatidylcholines in the gastrointestinal lumen. Plays a stem cell regulator role in colon epithelium. Within intracellular compartment, mediates Paneth-like cell differentiation and its stem cell supporting functions by inhibiting the Wnt signaling pathway in intestinal stem cell (ISC). Secreted in the intestinal lumen upon inflammation, acts in an autocrine way and promotes prostaglandin E2 synthesis that stimulates Wnt signaling pathway in ISCs and tissue regeneration. May participate in hair follicle morphogenesis by regulating phosphatidylethanolamines metabolism at the outermost epithelial layer and facilitating melanin synthesis. By releasing lysophosphatidylcholines (LPCs) at sperm acrosome, controls sperm cell capacitation, acrosome reaction and overall fertility. May promote neurite outgrowth in neuron fibers involved in nociception. Contributes to lipid remodeling of cellular membranes and generation of lipid mediators involved in pathogen clearance. Cleaves sn-2 fatty acyl chains of phosphatidylglycerols and phosphatidylethanolamines, which are major components of membrane phospholipids in bacteria. Displays bactericidal activity against Gram-positive bacteria by directly hydrolyzing phospholipids of the bacterial membrane. In pulmonary epithelium, may contribute to host defense response against adenoviral infection. Prevents adenovirus entry into host cells by hydrolyzing host cell plasma membrane, releasing C16:0 LPCs that inhibit virus-mediated membrane fusion and viral infection. Likely prevents adenoviral entry into the endosomes of host cells. May play a role in maturation and activation of innate immune cells including macrophages, group 2 innate lymphoid cells and mast cells. This chain is Group 10 secretory phospholipase A2 (PLA2G10), found in Homo sapiens (Human).